The following is a 153-amino-acid chain: Neuromedin-S (153 aa).

An N-terminal signal peptide occupies residues 1–26 (MKHLRPQFPLILAIYCFCMLQIPSSG). Propeptides lie at residues 27 to 69 (FPQP…IYKR), 70 to 105 (FLFH…ANRR), and 106 to 108 (MKR). An Asparagine amide modification is found at N141. Residues 144 to 153 (NIEDEAQIQW) constitute a propeptide that is removed on maturation.

The protein belongs to the NmU family.

The protein resides in the secreted. Its function is as follows. Implicated in the regulation of circadian rhythms through autocrine and/or paracrine actions. This Homo sapiens (Human) protein is Neuromedin-S (NMS).